A 422-amino-acid chain; its full sequence is Enolase (422 aa).

Gln-163 provides a ligand contact to (2R)-2-phosphoglycerate. Glu-205 functions as the Proton donor in the catalytic mechanism. The Mg(2+) site is built by Asp-242, Glu-283, and Asp-310. The (2R)-2-phosphoglycerate site is built by Lys-335, Arg-364, Ser-365, and Lys-386. Lys-335 functions as the Proton acceptor in the catalytic mechanism.

This sequence belongs to the enolase family. Mg(2+) serves as cofactor.

It is found in the cytoplasm. The protein resides in the secreted. Its subcellular location is the cell surface. The enzyme catalyses (2R)-2-phosphoglycerate = phosphoenolpyruvate + H2O. It functions in the pathway carbohydrate degradation; glycolysis; pyruvate from D-glyceraldehyde 3-phosphate: step 4/5. In terms of biological role, catalyzes the reversible conversion of 2-phosphoglycerate (2-PG) into phosphoenolpyruvate (PEP). It is essential for the degradation of carbohydrates via glycolysis. The sequence is that of Enolase from Bdellovibrio bacteriovorus (strain ATCC 15356 / DSM 50701 / NCIMB 9529 / HD100).